Consider the following 275-residue polypeptide: MVRTRWQPPLRALLLLVLVWLPQSLSLDLIAYVPQITAWDLEGKITATTFSLEQPRCVFDEHVSTKDTIWLVVAFSNASRDFQNPQTAAKIPTFPQLLTDGHYMTLPLSLDQLPCEDLTGGSGGAPVLRVGNDFGCYQRPYCNAPLPSQGPYSVKFLVMDAAGPPKAETKWSNPIYLHQGKNPNSIDTWPGRRSGCMIVITSILSALAGLLLLAFLAASTTRFSSLWWPEEAPEQLRIGSFMGKRYMTHHIPPSEAATLPVGCEPGLDPLPSLSP.

The first 26 residues, 1 to 26 (MVRTRWQPPLRALLLLVLVWLPQSLS), serve as a signal peptide directing secretion. Residues 27-196 (LDLIAYVPQI…DTWPGRRSGC (170 aa)) are Lumenal-facing. An N-linked (GlcNAc...) asparagine glycan is attached at asparagine 77. A helical membrane pass occupies residues 197–217 (MIVITSILSALAGLLLLAFLA). Topologically, residues 218–275 (ASTTRFSSLWWPEEAPEQLRIGSFMGKRYMTHHIPPSEAATLPVGCEPGLDPLPSLSP) are cytoplasmic.

The protein belongs to the uroplakin-3 family. Heterodimer with uroplakin-1B (UPK1B). As to expression, expression is urothelium-specific.

It localises to the cell membrane. In terms of biological role, component of the asymmetric unit membrane (AUM); a highly specialized biomembrane elaborated by terminally differentiated urothelial cells. May play an important role in AUM-cytoskeleton interaction in terminally differentiated urothelial cells. It also contributes to the formation of urothelial glycocalyx which may play an important role in preventing bacterial adherence. This chain is Uroplakin-3b (Upk3b), found in Mus musculus (Mouse).